We begin with the raw amino-acid sequence, 335 residues long: uncharacterized protein (335 aa).

Positions 1-21 (MDKKARAHTVIVCLVGALSLA) are cleaved as a signal peptide. The N-palmitoyl cysteine moiety is linked to residue Cys-22. A lipid anchor (S-diacylglycerol cysteine) is attached at Cys-22.

The protein localises to the cell membrane. This is an uncharacterized protein from Treponema pallidum (strain Nichols).